Consider the following 422-residue polypeptide: MLSASANMAAALRAAGALLREPLVHGSSRACQPWRCQSGAAVAATTEKVHHAKTTKPQAQPERRKPKTGILMLNMGGPETLGEVQDFLQRLFLDRDLMTLPIQNKLAPFIAKRRTPKIQEQYRRIGGGSPIKMWTSKQGEGMVKLLDELSPATAPHKYYIGFRYVHPLTEEAIEEMERDGLERAIAFTQYPQYSCSTTGSSLNAIYRYYNEVGQKPTMKWSTIDRWPTHPLLIQCFADHILKELNHFPEEKRSEVVILFSAHSLPMSVVNRGDPYPQEVGATVHKVMEKLGYPNPYRLVWQSKVGPVPWLGPQTDEAIKGLCERGRKNILLVPIAFTSDHIETLYELDIEYSQVLAQKCGAENIRRAESLNGNPLFSKALADLVHSHIQSNKLCSTQLSLNCPLCVNPVCRKTKSFFTSQQL.

The N-terminal 53 residues, 1 to 53, are a transit peptide targeting the mitochondrion; the sequence is MLSASANMAAALRAAGALLREPLVHGSSRACQPWRCQSGAAVAATTEKVHHAK. An N6-acetyllysine modification is found at K56. R114, Y122, and S129 together coordinate protoporphyrin IX. At K137 the chain carries N6-succinyllysine. Residue C195 participates in [2Fe-2S] cluster binding. H229 is an active-site residue. K289 is subject to N6-acetyllysine; alternate. The residue at position 289 (K289) is an N6-succinyllysine; alternate. The active site involves D382. [2Fe-2S] cluster-binding residues include C402, C405, and C410. K414 is modified (N6-acetyllysine; alternate). Residue K414 is modified to N6-succinyllysine; alternate.

It belongs to the ferrochelatase family. As to quaternary structure, homodimer. Homotetramer. Interaction with PGRMC1; the interaction results in decreased FECH activity. Interacts with ABCB10 and SLC25A37; this interaction forms an oligomeric complex. Forms a complex with ABCB7 and ABCB10, where a dimeric FECH bridges ABCB7 and ABCB10 homodimers; this complex may be required for cellular iron homeostasis, mitochondrial function and heme biosynthesis. Interacts with ABCB7 and ABCB10. Requires [2Fe-2S] cluster as cofactor. In terms of tissue distribution, erythroid and hepatic cells.

It is found in the mitochondrion inner membrane. It catalyses the reaction heme b + 2 H(+) = protoporphyrin IX + Fe(2+). The protein operates within porphyrin-containing compound metabolism; protoheme biosynthesis; protoheme from protoporphyrin-IX: step 1/1. Its function is as follows. Catalyzes the ferrous insertion into protoporphyrin IX. This Mus musculus (Mouse) protein is Ferrochelatase, mitochondrial.